The following is a 274-amino-acid chain: Formamidopyrimidine-DNA glycosylase (274 aa).

Pro2 (schiff-base intermediate with DNA) is an active-site residue. The active-site Proton donor is the Glu3. The active-site Proton donor; for beta-elimination activity is Lys58. DNA contacts are provided by His92 and Arg111. The FPG-type; degenerate zinc-finger motif lies at 239-273 (HVYGREGEPCERCGTIIEKIKVAQRGTHFCPLEQR). Arg263 (proton donor; for delta-elimination activity) is an active-site residue.

This sequence belongs to the FPG family. In terms of assembly, monomer. It depends on Zn(2+) as a cofactor.

It catalyses the reaction Hydrolysis of DNA containing ring-opened 7-methylguanine residues, releasing 2,6-diamino-4-hydroxy-5-(N-methyl)formamidopyrimidine.. The catalysed reaction is 2'-deoxyribonucleotide-(2'-deoxyribose 5'-phosphate)-2'-deoxyribonucleotide-DNA = a 3'-end 2'-deoxyribonucleotide-(2,3-dehydro-2,3-deoxyribose 5'-phosphate)-DNA + a 5'-end 5'-phospho-2'-deoxyribonucleoside-DNA + H(+). Functionally, involved in base excision repair of DNA damaged by oxidation or by mutagenic agents. Acts as a DNA glycosylase that recognizes and removes damaged bases. Has a preference for oxidized purines, such as 7,8-dihydro-8-oxoguanine (8-oxoG). Has AP (apurinic/apyrimidinic) lyase activity and introduces nicks in the DNA strand. Cleaves the DNA backbone by beta-delta elimination to generate a single-strand break at the site of the removed base with both 3'- and 5'-phosphates. This chain is Formamidopyrimidine-DNA glycosylase, found in Lactiplantibacillus plantarum (strain ATCC BAA-793 / NCIMB 8826 / WCFS1) (Lactobacillus plantarum).